The chain runs to 282 residues: tRNA pseudouridine synthase A (282 aa).

D61 acts as the Nucleophile in catalysis. Y119 lines the substrate pocket.

Belongs to the tRNA pseudouridine synthase TruA family. Homodimer.

The enzyme catalyses uridine(38/39/40) in tRNA = pseudouridine(38/39/40) in tRNA. In terms of biological role, formation of pseudouridine at positions 38, 39 and 40 in the anticodon stem and loop of transfer RNAs. In Nostoc sp. (strain PCC 7120 / SAG 25.82 / UTEX 2576), this protein is tRNA pseudouridine synthase A.